The chain runs to 166 residues: Phospholipase A2 inhibitor clone 02/03/06/07 (166 aa).

An N-terminal signal peptide occupies residues 1-19; sequence MRLILLSGLLLLGTFLANG. Positions 46-161 constitute a C-type lectin domain; sequence LKHAFLTVHK…CDDNLLVVCE (116 aa). Cystine bridges form between Cys83–Cys160 and Cys138–Cys152. An N-linked (GlcNAc...) asparagine glycan is attached at Asn122.

This sequence belongs to the alpha-type phospholipase A2 inhibitor family. Homotrimer; non-covalently linked. Expressed by the liver.

It localises to the secreted. Functionally, this phospholipase A2 inhibitor binds directly phospholipase A2 in the presence or absence of calcium. The chain is Phospholipase A2 inhibitor clone 02/03/06/07 from Lachesis muta muta (Bushmaster).